A 181-amino-acid polypeptide reads, in one-letter code: Shikimate kinase 2 (181 aa).

ATP is bound at residue 12–17 (GCGKTT). Mg(2+) contacts are provided by threonine 16 and aspartate 32. Substrate is bound by residues aspartate 34, arginine 58, and glycine 79. An LID domain region spans residues 112 to 126 (EAEPEADLRPTLTGK). Residue arginine 120 participates in ATP binding. Substrate is bound at residue arginine 139.

The protein belongs to the shikimate kinase family. AroL subfamily. In terms of assembly, monomer. Requires Mg(2+) as cofactor.

The protein resides in the cytoplasm. The catalysed reaction is shikimate + ATP = 3-phosphoshikimate + ADP + H(+). It functions in the pathway metabolic intermediate biosynthesis; chorismate biosynthesis; chorismate from D-erythrose 4-phosphate and phosphoenolpyruvate: step 5/7. In terms of biological role, catalyzes the specific phosphorylation of the 3-hydroxyl group of shikimic acid using ATP as a cosubstrate. This chain is Shikimate kinase 2, found in Salmonella dublin (strain CT_02021853).